The following is a 1487-amino-acid chain: Protein clueless (1487 aa).

2 disordered regions span residues 1-94 (MALE…NGDA) and 110-140 (GATA…EAAA). Positions 56-65 (TKKKGKKNRN) are enriched in basic residues. Over residues 111 to 126 (ATAAAGATEAAAEVGS) the composition is skewed to low complexity. The residue at position 284 (Ser284) is a Phosphoserine. Positions 438-680 (RAEDAFSSKL…RTFPPDVNFL (243 aa)) constitute a Clu domain. Residues 739-785 (QAEKELPSITEKQEEPEKEQAEKSSAEQPEKEKEKEKDKEDEQKESK) are compositionally biased toward basic and acidic residues. Disordered regions lie at residues 739-794 (QAEK…TKSA) and 980-1040 (VSSE…TAST). Positions 988-1005 (KQSRNNGGKHNKHNKSNK) are enriched in basic residues. Positions 1009–1019 (PQSTSAAAATQ) are enriched in polar residues. The span at 1020–1040 (NGHSSTAANGSANSAANTAST) shows a compositional bias: low complexity. 3 TPR repeats span residues 1140 to 1173 (AYNF…LNNV), 1266 to 1299 (ALID…NLKY), and 1301 to 1334 (GNKA…EKET). The disordered stretch occupies residues 1456–1487 (DTEQPKEGSEVEGATATQLTNGSEDSTTTVSS). Residues 1470–1487 (TATQLTNGSEDSTTTVSS) show a composition bias toward polar residues.

Belongs to the CLU family.

It localises to the cytoplasm. Its function is as follows. mRNA-binding protein involved in proper cytoplasmic distribution of mitochondria. This Drosophila mojavensis (Fruit fly) protein is Protein clueless.